The following is a 721-amino-acid chain: Methionine--tRNA ligase (721 aa).

Positions 27–37 (PYANGQIHIGH) match the 'HIGH' region motif. Residues Cys-158, Cys-161, Cys-171, and Cys-174 each coordinate Zn(2+). Residues 348–352 (KMSKS) carry the 'KMSKS' region motif. Position 351 (Lys-351) interacts with ATP. In terms of domain architecture, tRNA-binding spans 615 to 721 (DFAKIDLRIA…SGAKPGMRVK (107 aa)).

This sequence belongs to the class-I aminoacyl-tRNA synthetase family. MetG type 1 subfamily. Homodimer. Requires Zn(2+) as cofactor.

It localises to the cytoplasm. The catalysed reaction is tRNA(Met) + L-methionine + ATP = L-methionyl-tRNA(Met) + AMP + diphosphate. Its function is as follows. Is required not only for elongation of protein synthesis but also for the initiation of all mRNA translation through initiator tRNA(fMet) aminoacylation. The polypeptide is Methionine--tRNA ligase (Burkholderia vietnamiensis (strain G4 / LMG 22486) (Burkholderia cepacia (strain R1808))).